The following is a 101-amino-acid chain: Large ribosomal subunit protein bL21 (101 aa).

This sequence belongs to the bacterial ribosomal protein bL21 family. In terms of assembly, part of the 50S ribosomal subunit. Contacts protein L20.

This protein binds to 23S rRNA in the presence of protein L20. The chain is Large ribosomal subunit protein bL21 from Corynebacterium aurimucosum (strain ATCC 700975 / DSM 44827 / CIP 107346 / CN-1) (Corynebacterium nigricans).